Here is a 346-residue protein sequence, read N- to C-terminus: MTGQSSSQAATPIQWWKPALFFLVVIAGLWYVKWEPYYGKAFTAAETHSIGKSILAQADANPWQAALDYAMIYFLAVWKAAVLGVILGSLIQVLIPRDWLLRTLGQSRFRGTLLGTLFSLPGMMCTCCAAPVAAGMRRQQVSMGGALAFWMGNPVLNPATLVFMGFVLGWGFAAIRLVAGLVMVLLIATLVQKWVRETPQTQAPVEIDIPEAQGGFFSRWGRALWTLFWSTIPVYILAVLVLGAARVWLFPHADGAVDNSLMWVVAMAVAGCLFVIPTAAEIPIVQTMMLAGMGTAPALALLMTLPAVSLPSLIMLRKAFPAKALWLTGAMVAVSGVIVGGLALLF.

The next 9 membrane-spanning stretches (helical) occupy residues 12–32 (PIQWWKPALFFLVVIAGLWYV), 71–91 (MIYFLAVWKAAVLGVILGSLI), 113–133 (LLGTLFSLPGMMCTCCAAPVA), 146–166 (ALAFWMGNPVLNPATLVFMGF), 167–187 (VLGWGFAAIRLVAGLVMVLLI), 223–243 (ALWTLFWSTIPVYILAVLVLG), 260–280 (SLMWVVAMAVAGCLFVIPTAA), 296–316 (APALALLMTLPAVSLPSLIML), and 326–346 (WLTGAMVAVSGVIVGGLALLF).

Belongs to the UPF0718 family.

The protein localises to the cell membrane. In Escherichia coli (strain K12), this protein is UPF0718 protein YraQ (yraQ).